The following is a 457-amino-acid chain: Cysteine--tRNA ligase (457 aa).

A Zn(2+)-binding site is contributed by cysteine 30. The 'HIGH' region motif lies at 32-42 (PTVYDRAHLGN). The Zn(2+) site is built by cysteine 213, histidine 238, and glutamate 242. A 'KMSKS' region motif is present at residues 271–275 (KMSKS). Residue lysine 274 coordinates ATP.

It belongs to the class-I aminoacyl-tRNA synthetase family. Monomer. Zn(2+) is required as a cofactor.

Its subcellular location is the cytoplasm. The catalysed reaction is tRNA(Cys) + L-cysteine + ATP = L-cysteinyl-tRNA(Cys) + AMP + diphosphate. The polypeptide is Cysteine--tRNA ligase (Ruegeria sp. (strain TM1040) (Silicibacter sp.)).